The following is a 399-amino-acid chain: UDP-N-acetylglucosamine--N-acetylmuramyl-(pentapeptide) pyrophosphoryl-undecaprenol N-acetylglucosamine transferase (399 aa).

Residues 29–31 (TAG), N148, R185, S219, and Q318 contribute to the UDP-N-acetyl-alpha-D-glucosamine site.

The protein belongs to the glycosyltransferase 28 family. MurG subfamily.

The protein localises to the cell membrane. The enzyme catalyses di-trans,octa-cis-undecaprenyl diphospho-N-acetyl-alpha-D-muramoyl-L-alanyl-D-glutamyl-meso-2,6-diaminopimeloyl-D-alanyl-D-alanine + UDP-N-acetyl-alpha-D-glucosamine = di-trans,octa-cis-undecaprenyl diphospho-[N-acetyl-alpha-D-glucosaminyl-(1-&gt;4)]-N-acetyl-alpha-D-muramoyl-L-alanyl-D-glutamyl-meso-2,6-diaminopimeloyl-D-alanyl-D-alanine + UDP + H(+). The protein operates within cell wall biogenesis; peptidoglycan biosynthesis. In terms of biological role, cell wall formation. Catalyzes the transfer of a GlcNAc subunit on undecaprenyl-pyrophosphoryl-MurNAc-pentapeptide (lipid intermediate I) to form undecaprenyl-pyrophosphoryl-MurNAc-(pentapeptide)GlcNAc (lipid intermediate II). The polypeptide is UDP-N-acetylglucosamine--N-acetylmuramyl-(pentapeptide) pyrophosphoryl-undecaprenol N-acetylglucosamine transferase (Mycobacterium ulcerans (strain Agy99)).